The sequence spans 87 residues: uncharacterized protein (87 aa).

To A.fulgidus AF_1348 and AF_1363.

This is an uncharacterized protein from Archaeoglobus fulgidus (strain ATCC 49558 / DSM 4304 / JCM 9628 / NBRC 100126 / VC-16).